A 143-amino-acid chain; its full sequence is UPF0251 protein CA_C3166 (143 aa).

Belongs to the UPF0251 family.

In Clostridium acetobutylicum (strain ATCC 824 / DSM 792 / JCM 1419 / IAM 19013 / LMG 5710 / NBRC 13948 / NRRL B-527 / VKM B-1787 / 2291 / W), this protein is UPF0251 protein CA_C3166.